Consider the following 187-residue polypeptide: MKNIIFMGPPGAGKGTQAKILCERLSIPQISTGDILREAVKNQTAMGIEAKRYMDAGDLVPDSVVIGIIKDRIREADCKNGFLLDGFPRTVEQAEALDTLLKNEGKSIDKAINLQVPDAELLKRLLGRAEIEGRADDNEVTIKNRLDNYNKKTLPLLDFYATRKKLSQVNGVGSLEEVTSLIQKELA.

11 to 16 (GAGKGT) is an ATP binding site. Residues 31–60 (STGDILREAVKNQTAMGIEAKRYMDAGDLV) form an NMP region. Residues threonine 32, arginine 37, 58–60 (DLV), 86–89 (GFPR), and glutamine 93 each bind AMP. The interval 127–137 (GRAEIEGRADD) is LID. ATP is bound at residue arginine 128. 2 residues coordinate AMP: arginine 134 and arginine 145. Position 173 (glycine 173) interacts with ATP.

The protein belongs to the adenylate kinase family. Monomer.

Its subcellular location is the cytoplasm. The enzyme catalyses AMP + ATP = 2 ADP. Its pathway is purine metabolism; AMP biosynthesis via salvage pathway; AMP from ADP: step 1/1. Catalyzes the reversible transfer of the terminal phosphate group between ATP and AMP. Plays an important role in cellular energy homeostasis and in adenine nucleotide metabolism. This chain is Adenylate kinase, found in Leptospira interrogans serogroup Icterohaemorrhagiae serovar copenhageni (strain Fiocruz L1-130).